A 395-amino-acid chain; its full sequence is Elongation factor Tu (395 aa).

The tr-type G domain maps to 10–204; it reads KPHVNIGTIG…AVDEYIPTPQ (195 aa). Residues 19–26 are G1; it reads GHVDHGKT. A GTP-binding site is contributed by 19–26; sequence GHVDHGKT. A Mg(2+)-binding site is contributed by threonine 26. The tract at residues 60–64 is G2; it reads GITIS. The G3 stretch occupies residues 81–84; the sequence is DCPG. GTP contacts are provided by residues 81-85 and 136-139; these read DCPGH and NKCD. A G4 region spans residues 136–139; that stretch reads NKCD. The segment at 174–176 is G5; sequence SAL.

Belongs to the TRAFAC class translation factor GTPase superfamily. Classic translation factor GTPase family. EF-Tu/EF-1A subfamily. In terms of assembly, monomer.

Its subcellular location is the cytoplasm. The catalysed reaction is GTP + H2O = GDP + phosphate + H(+). Functionally, GTP hydrolase that promotes the GTP-dependent binding of aminoacyl-tRNA to the A-site of ribosomes during protein biosynthesis. The protein is Elongation factor Tu of Anoxybacillus flavithermus (strain DSM 21510 / WK1).